A 334-amino-acid polypeptide reads, in one-letter code: Probable fructose-bisphosphate aldolase class 1 (334 aa).

This sequence belongs to the class I fructose-bisphosphate aldolase family.

The enzyme catalyses beta-D-fructose 1,6-bisphosphate = D-glyceraldehyde 3-phosphate + dihydroxyacetone phosphate. The protein operates within carbohydrate degradation; glycolysis; D-glyceraldehyde 3-phosphate and glycerone phosphate from D-glucose: step 4/4. In Xylella fastidiosa (strain 9a5c), this protein is Probable fructose-bisphosphate aldolase class 1.